The chain runs to 251 residues: UPF0309 protein SGR_3073 (251 aa).

One can recognise an SIS domain in the interval 36–221; the sequence is VADTVASGGR…EQLVARGIEP (186 aa).

This sequence belongs to the UPF0309 family.

The sequence is that of UPF0309 protein SGR_3073 from Streptomyces griseus subsp. griseus (strain JCM 4626 / CBS 651.72 / NBRC 13350 / KCC S-0626 / ISP 5235).